We begin with the raw amino-acid sequence, 66 residues long: Sodium channel alpha-toxin Acra8 (66 aa).

An LCN-type CS-alpha/beta domain is found at 2–64; sequence RDGYIVDDKN…VPIKEKGRCN (63 aa). Intrachain disulfides connect Cys-12/Cys-63, Cys-16/Cys-36, Cys-22/Cys-46, and Cys-26/Cys-48. Residue Asn-64 is modified to Asparagine amide. Residues 65–66 constitute a propeptide that is removed on maturation; that stretch reads GR.

Belongs to the long (4 C-C) scorpion toxin superfamily. Sodium channel inhibitor family. Alpha subfamily. Expressed by the venom gland.

It localises to the secreted. Alpha toxins bind voltage-independently at site-3 of sodium channels (Nav) and inhibit the inactivation of the activated channels, thereby blocking neuronal transmission. The sequence is that of Sodium channel alpha-toxin Acra8 from Androctonus crassicauda (Arabian fat-tailed scorpion).